A 349-amino-acid polypeptide reads, in one-letter code: N-acetyltaurine hydrolase (349 aa).

A divalent metal cation contacts are provided by His-26, His-28, Glu-169, His-201, His-230, and Asp-298.

The protein belongs to the metallo-dependent hydrolases superfamily. Phosphotriesterase family. The cofactor is a divalent metal cation.

It localises to the cytoplasm. The protein localises to the cytosol. The catalysed reaction is N-acetyltaurine + H2O = taurine + acetate. The enzyme catalyses N-propanoyltaurine + H2O = propanoate + taurine. It carries out the reaction N-acetyl-L-methionine + H2O = L-methionine + acetate. It catalyses the reaction N-acetyl-L-isoleucine + H2O = L-isoleucine + acetate. The catalysed reaction is N-acetyl-L-leucine + H2O = L-leucine + acetate. The enzyme catalyses N-acetyl-L-valine + H2O = L-valine + acetate. Its function is as follows. N-acetyltaurine hydrolase that regulates feeding by catalyzing the hydrolysis of N-acetyltaurine into taurine and acetate. N-acetyltaurine has anorexigenic and anti-obesity effects that are dependent on GFRAL receptor and GDF15. PTER also acts on other N-acetyl amino acids (Met, Ile, Leu, Val) and N-propionyltaurine, but at lower rates. This Pongo abelii (Sumatran orangutan) protein is N-acetyltaurine hydrolase.